Reading from the N-terminus, the 380-residue chain is MKVVHVVRQFHPSIGGMEEVVLNVARQHQANSADTVEIVTLDRVFTDPSAQLAQHELHQGLSITRIGYRGSSRYPIAPSVLGAIRSADVVHLHGIDFFYDYLALTKPLHGKPMVVSTHGGFFHTAYASRMKQIWFQTLTRTSALAYARVIATSENDGDLFAKVVAPSRLRVIENGVDVEKYAGQGARAPGRTMLYFGRWSVNKGLIETLELLQAALTRDPQWRLIIAGREYDLNEADLRKAIAERGLQDKVQLSMSPSQQQLCALMQQAQFFVCLSRHEGFGIAAVEAMSAGLIPILSDIPPFVRLATESGQGVIVNRDRIQAAADSVQALALQANADFDARRTATMAYVARYDWRHVVGRYIDEYHAALGTPRTQEAVR.

Belongs to the glycosyltransferase group 1 family. Glycosyltransferase 4 subfamily.

The catalysed reaction is beta-D-Glc-(1-&gt;4)-alpha-D-Glc-di-trans,octa-cis-undecaprenyl diphosphate + GDP-alpha-D-mannose = alpha-D-Man-(1-&gt;3)-beta-D-Glc-(1-&gt;4)-alpha-D-Glc-1-di-trans,octa-cis-undecaprenyl diphosphate + GDP + H(+). In terms of biological role, involved in the biosynthesis of the exopolysaccharide xanthan, a polymer that is comprised of repeating pentasaccharide units with the structure of a beta-(1,4)-linked D-glucose backbone with trisaccharide side chains composed of mannose-beta-(1,4)-glucuronic acid-beta-(1,2)-mannose attached to alternate glucose residues in the backbone by alpha-(1,3) linkages. Xanthan is involved in pathogenicity but has also been used in a variety of applications as a specialty polymer for commercial applications, including food additives, where they act as viscosifying, stabilizing, emulsifying, or gelling agents. In Xanthomonas campestris, this protein is GDP-mannose:cellobiosyl-diphosphopolyprenol alpha-mannosyltransferase (gumH).